The sequence spans 197 residues: FMN-dependent NADH:quinone oxidoreductase 1 (197 aa).

FMN-binding positions include Ser-10, 16–18 (SQS), 93–96 (MYNF), and 137–140 (TRGG).

This sequence belongs to the azoreductase type 1 family. As to quaternary structure, homodimer. It depends on FMN as a cofactor.

The enzyme catalyses 2 a quinone + NADH + H(+) = 2 a 1,4-benzosemiquinone + NAD(+). It catalyses the reaction N,N-dimethyl-1,4-phenylenediamine + anthranilate + 2 NAD(+) = 2-(4-dimethylaminophenyl)diazenylbenzoate + 2 NADH + 2 H(+). Its function is as follows. Quinone reductase that provides resistance to thiol-specific stress caused by electrophilic quinones. Functionally, also exhibits azoreductase activity. Catalyzes the reductive cleavage of the azo bond in aromatic azo compounds to the corresponding amines. The sequence is that of FMN-dependent NADH:quinone oxidoreductase 1 from Photobacterium profundum (strain SS9).